The sequence spans 641 residues: Soluble starch synthase 1, chloroplastic/amyloplastic (641 aa).

Residues Met1–Ala113 constitute a chloroplast transit peptide. A disordered region spans residues Thr62–Pro96. The segment covering Ser68–Pro87 has biased composition (pro residues). ADP-alpha-D-glucose is bound at residue Lys147.

This sequence belongs to the glycosyltransferase 1 family. Bacterial/plant glycogen synthase subfamily.

The protein localises to the plastid. Its subcellular location is the chloroplast. It localises to the amyloplast. The enzyme catalyses [(1-&gt;4)-alpha-D-glucosyl](n) + ADP-alpha-D-glucose = [(1-&gt;4)-alpha-D-glucosyl](n+1) + ADP + H(+). It participates in glycan biosynthesis; starch biosynthesis. This chain is Soluble starch synthase 1, chloroplastic/amyloplastic, found in Oryza sativa subsp. indica (Rice).